A 426-amino-acid polypeptide reads, in one-letter code: MTKCKIILVISLSILALLCIGCIENSTINTKTTVNSTVDTKTIINTDSVEEYDIATANNAFTFDLYSMVKNEDENVLFSPYSIFSAMAVCYDGTEGSTKEQMSNAFYYPLNKLVLEESSKKMIGTINSNNDAYDLETTNALWVLENYTLNEQYVSNAKNYYDGMVTPVDFVNEPEASTDTINKWVEEKTNEKIKKLIPEGEIGPDTRLVITNTIYFNGTWVKEFDPDITRTRSFTLSNGDEKSVSTMRIVEKFNYGEDQKAKILELPYKGDNLSMYIVLPKENNITELENNFTLKYYSKLKENMSTGDYVEVWIPKFTFKTEAELKSPLIEMGVVDAFNPNAANFSGITPDKSLAISEIYHQAFVDVHEKGTEAAAATGAIILEEEIEYTWEFKADHPFLFMIEDKRTGCILFIGKVESPEYEKMS.

The protein belongs to the serpin family.

This is an uncharacterized protein from Methanosarcina acetivorans (strain ATCC 35395 / DSM 2834 / JCM 12185 / C2A).